Reading from the N-terminus, the 388-residue chain is Integrase (388 aa).

A Core-binding (CB) domain is found at 70-151; that stretch reads YTVADAVNDW…CLNRAVKRAM (82 aa). One can recognise a Tyr recombinase domain in the interval 173 to 379; that stretch reads RPSKALTFAQ…VIQTGAVVMD (207 aa). Residues Arg-208, Lys-249, Arg-330, and His-353 contribute to the active site. Tyr-363 functions as the O-(3'-phospho-DNA)-tyrosine intermediate in the catalytic mechanism.

Belongs to the 'phage' integrase family.

Required for integration of pSAM2. The sequence is that of Integrase (int) from Streptomyces ambofaciens.